The chain runs to 187 residues: Large ribosomal subunit protein uL6 (187 aa).

The tract at residues 151-170 (EAARIRSLRPPEPYKGKGIK) is disordered.

Belongs to the universal ribosomal protein uL6 family. Part of the 50S ribosomal subunit.

This protein binds to the 23S rRNA, and is important in its secondary structure. It is located near the subunit interface in the base of the L7/L12 stalk, and near the tRNA binding site of the peptidyltransferase center. This Chloroflexus aurantiacus (strain ATCC 29366 / DSM 635 / J-10-fl) protein is Large ribosomal subunit protein uL6.